Reading from the N-terminus, the 94-residue chain is Co-chaperonin GroES (94 aa).

Belongs to the GroES chaperonin family. In terms of assembly, heptamer of 7 subunits arranged in a ring. Interacts with the chaperonin GroEL.

It localises to the cytoplasm. Functionally, together with the chaperonin GroEL, plays an essential role in assisting protein folding. The GroEL-GroES system forms a nano-cage that allows encapsulation of the non-native substrate proteins and provides a physical environment optimized to promote and accelerate protein folding. GroES binds to the apical surface of the GroEL ring, thereby capping the opening of the GroEL channel. The chain is Co-chaperonin GroES from Streptococcus pneumoniae serotype 19F (strain G54).